The primary structure comprises 173 residues: Co-chaperone protein HscB homolog (173 aa).

The region spanning 5–77 (CHYALFDLQP…PRRARYLLAI (73 aa)) is the J domain.

This sequence belongs to the HscB family. As to quaternary structure, interacts with HscA and stimulates its ATPase activity.

Co-chaperone involved in the maturation of iron-sulfur cluster-containing proteins. Seems to help targeting proteins to be folded toward HscA. The polypeptide is Co-chaperone protein HscB homolog (Pseudomonas putida (strain GB-1)).